Here is a 267-residue protein sequence, read N- to C-terminus: tRNA-cytidine(32) 2-sulfurtransferase 1 (267 aa).

Residues 42-47 (SGGKDS) carry the PP-loop motif motif. Positions 117, 120, and 208 each coordinate [4Fe-4S] cluster.

It belongs to the TtcA family. As to quaternary structure, homodimer. Mg(2+) serves as cofactor. The cofactor is [4Fe-4S] cluster.

It is found in the cytoplasm. The enzyme catalyses cytidine(32) in tRNA + S-sulfanyl-L-cysteinyl-[cysteine desulfurase] + AH2 + ATP = 2-thiocytidine(32) in tRNA + L-cysteinyl-[cysteine desulfurase] + A + AMP + diphosphate + H(+). It functions in the pathway tRNA modification. Its function is as follows. Catalyzes the ATP-dependent 2-thiolation of cytidine in position 32 of tRNA, to form 2-thiocytidine (s(2)C32). The sulfur atoms are provided by the cysteine/cysteine desulfurase (IscS) system. This is tRNA-cytidine(32) 2-sulfurtransferase 1 from Francisella tularensis subsp. tularensis (strain FSC 198).